Here is a 412-residue protein sequence, read N- to C-terminus: Tyrosine--tRNA ligase (412 aa).

Tyrosine 31 lines the L-tyrosine pocket. Positions proline 36–histidine 45 match the 'HIGH' region motif. 2 residues coordinate L-tyrosine: tyrosine 162 and glutamine 166. The 'KMSKS' region signature appears at lysine 222–threonine 226. Lysine 225 is a binding site for ATP. The S4 RNA-binding domain maps to lysine 345–leucine 411.

It belongs to the class-I aminoacyl-tRNA synthetase family. TyrS type 1 subfamily. As to quaternary structure, homodimer.

The protein localises to the cytoplasm. The catalysed reaction is tRNA(Tyr) + L-tyrosine + ATP = L-tyrosyl-tRNA(Tyr) + AMP + diphosphate + H(+). Catalyzes the attachment of tyrosine to tRNA(Tyr) in a two-step reaction: tyrosine is first activated by ATP to form Tyr-AMP and then transferred to the acceptor end of tRNA(Tyr). The protein is Tyrosine--tRNA ligase of Chlamydia trachomatis serovar L2 (strain ATCC VR-902B / DSM 19102 / 434/Bu).